The following is a 133-amino-acid chain: DNA-binding protein StpA (133 aa).

The segment at 81–115 (AMPRSAKKRQPRPAKYRFTDFNGEEKTWTGQGRTP) is disordered. The segment covering 85–95 (SAKKRQPRPAK) has biased composition (basic residues). The DNA-binding element occupies 111–116 (QGRTPK).

Belongs to the histone-like protein H-NS family. In terms of assembly, forms homodimers, can interact with H-NS.

The protein resides in the cytoplasm. The protein localises to the nucleoid. In terms of biological role, a DNA-binding protein that acts in a fashion similar to H-NS, repressing gene transcription. A subset of H-NS/StpA-regulated genes require auxillary proteins for repression; these auxillary proteins (Hha and other similar proteins) may also modulate oligomerization of the H-NS/StpA complex. The sequence is that of DNA-binding protein StpA (stpA) from Salmonella typhi.